Reading from the N-terminus, the 813-residue chain is Enhancer of polycomb homolog 1 (813 aa).

Disordered stretches follow at residues 310–403 (FKHQ…PFAF), 484–513 (MLSSPQPSPVNQFANTSEPNTSDRSSSKDL), and 528–577 (FRPR…SSGS). Positions 311 to 333 (KHQDATDSKEFKVNKQDKADLIR) are enriched in basic and acidic residues. K319 is covalently cross-linked (Glycyl lysine isopeptide (Lys-Gly) (interchain with G-Cter in SUMO2)). A compositionally biased stretch (low complexity) spans 346 to 361 (PPSAAAPQQQSPAALP). A compositionally biased stretch (polar residues) spans 486 to 513 (SSPQPSPVNQFANTSEPNTSDRSSSKDL). S538 carries the phosphoserine modification. Positions 564 to 577 (TCSTSTQNRSSSGS) are enriched in low complexity. Residue K650 forms a Glycyl lysine isopeptide (Lys-Gly) (interchain with G-Cter in SUMO2) linkage. The segment at 779–813 (VPSSSSVDSVPRENHESEKPALNNIADNTVAMEVT) is disordered. Residues 788–797 (VPRENHESEK) show a composition bias toward basic and acidic residues.

It belongs to the enhancer of polycomb family. Component of the NuA4 histone acetyltransferase complex which contains the catalytic subunit KAT5/TIP60 and the subunits EP400, TRRAP/PAF400, BRD8/SMAP, EPC1, DMAP1/DNMAP1, RUVBL1/TIP49, RUVBL2, ING3, actin, ACTL6A/BAF53A, MORF4L1/MRG15, MORF4L2/MRGX, MRGBP, YEATS4/GAS41, VPS72/YL1 and MEAF6. KAT5/TIP60, EPC1, and ING3 together constitute a minimal HAT complex termed Piccolo NuA4. Component of a NuA4-related complex which contains EP400, TRRAP/PAF400, SRCAP, BRD8/SMAP, EPC1, DMAP1/DNMAP1, RUVBL1/TIP49, RUVBL2, actin, ACTL6A/BAF53A, VPS72 and YEATS4/GAS41. Interacts with TRIM27. Interacts with MBTD1; interaction is direct and promotes recruitment of MBTD1 into the NuA4 histone acetyltransferase complex. Expressed in adult brain, heart, kidney, liver, lung, skeletal muscle and testis. Expressed in male germ cells, present in round spermatids of steps 1 to 4.

It localises to the nucleus. The protein resides in the cytoplasm. Functionally, component of the NuA4 histone acetyltransferase (HAT) complex, a multiprotein complex involved in transcriptional activation of select genes principally by acetylation of nucleosomal histones H4 and H2A. The NuA4 complex plays a direct role in repair of DNA double-strand breaks (DSBs) by promoting homologous recombination (HR). The NuA4 complex is also required for spermatid development by promoting acetylation of histones: histone acetylation is required for histone replacement during the transition from round to elongating spermatids. In the NuA4 complex, EPC1 is required to recruit MBTD1 into the complex. In Mus musculus (Mouse), this protein is Enhancer of polycomb homolog 1.